Here is a 122-residue protein sequence, read N- to C-terminus: Large ribosomal subunit protein bL12 (122 aa).

It belongs to the bacterial ribosomal protein bL12 family. In terms of assembly, homodimer. Part of the ribosomal stalk of the 50S ribosomal subunit. Forms a multimeric L10(L12)X complex, where L10 forms an elongated spine to which 2 to 4 L12 dimers bind in a sequential fashion. Binds GTP-bound translation factors.

Forms part of the ribosomal stalk which helps the ribosome interact with GTP-bound translation factors. Is thus essential for accurate translation. The sequence is that of Large ribosomal subunit protein bL12 from Buchnera aphidicola subsp. Schizaphis graminum (strain Sg).